The sequence spans 104 residues: Precursor of CEP11 (104 aa).

The signal sequence occupies residues 1–27 (MAKTRRVIYLFLTIVLLFCELIDEAQG). Residues 28–85 (SRFRCHHSEDYSCKKRSSHHHHHHHHHQQQQHHHKDTPPEELQGSIKTRRSKDIYGLN) constitute a propeptide that is removed on maturation. The segment at 37–104 (DYSCKKRSSH…SPGVGHLIKT (68 aa)) is disordered. The span at 41–62 (KKRSSHHHHHHHHHQQQQHHHK) shows a compositional bias: basic residues. P92 and P96 each carry hydroxyproline. Positions 101–104 (LIKT) are excised as a propeptide.

It belongs to the C-terminally encoded plant signaling peptide (CEP) family. As to quaternary structure, interacts with CEP receptors (e.g. CEPR1 and CEPR2). The mature small signaling peptide is generated by proteolytic processing of the longer precursor. As to expression, expressed in lateral root primordia and in lateral roots excluding the meristem region.

The protein resides in the secreted. Its subcellular location is the extracellular space. The protein localises to the apoplast. Functionally, extracellular signaling peptide that may regulate primary root growth rate and systemic nitrogen (N)-demand signaling. Mediates up-regulation of genes involved in N uptake and assimilation pathways. The chain is Precursor of CEP11 from Arabidopsis thaliana (Mouse-ear cress).